The chain runs to 709 residues: Dual specificity calcium/calmodulin-dependent 3',5'-cyclic nucleotide phosphodiesterase 1C (709 aa).

Residue M1 is modified to N-acetylmethionine. The tract at residues 123–146 is calmodulin-binding; that stretch reads EKPRFKSIVHAVQAGIFVERMYRR. One can recognise a PDEase domain in the interval 151–528; sequence VGLSYPPAVI…ERWRAKVPKE (378 aa). H228 functions as the Proton donor in the catalytic mechanism. Zn(2+) is bound by residues H232, H268, D269, and D376. Residue D269 coordinates Mg(2+). Disordered stretches follow at residues 453–495 and 523–650; these read LIDE…APIN and AKVP…TCRL. Residues 483–495 show a composition bias toward polar residues; sequence VKTSGSEGSAPIN. Residues 523-556 are compositionally biased toward basic and acidic residues; sequence AKVPKEEKAKKEAEEKARLAAEEQQKEMEAKSQA. The span at 571-581 shows a compositional bias: polar residues; the sequence is ETKNQVNGTRA. Basic and acidic residues-rich tracts occupy residues 582–598 and 606–633; these read NKSD…EKSS and DFKD…DGTK.

This sequence belongs to the cyclic nucleotide phosphodiesterase family. PDE1 subfamily. Homodimer. Zn(2+) serves as cofactor. The cofactor is Mg(2+). In terms of tissue distribution, isoform PDE1C2 is present in the heart and brain and, at lower levels in the lung, liver, kidney and skeletal muscle. Isoform PDE1C1 is expressed in the heart and brain and, at lower levels in lung. Also expressed at low levels in uterus and testis.

The protein resides in the lysosome. It carries out the reaction a nucleoside 3',5'-cyclic phosphate + H2O = a nucleoside 5'-phosphate + H(+). The catalysed reaction is 3',5'-cyclic GMP + H2O = GMP + H(+). The enzyme catalyses 3',5'-cyclic AMP + H2O = AMP + H(+). Its activity is regulated as follows. Type I PDE are activated by the binding of calmodulin in the presence of Ca(2+). Calmodulin-dependent cyclic nucleotide phosphodiesterase with a dual specificity for the second messengers cAMP and cGMP, which are key regulators of many important physiological processes. Has a high affinity for both cAMP and cGMP. Modulates the amplitude and duration of the cAMP signal in sensory cilia in response to odorant stimulation, hence contributing to the generation of action potentials. Regulates smooth muscle cell proliferation. Regulates the stability of growth factor receptors, including PDGFRB. The polypeptide is Dual specificity calcium/calmodulin-dependent 3',5'-cyclic nucleotide phosphodiesterase 1C (Homo sapiens (Human)).